The sequence spans 469 residues: Glutamate--tRNA ligase (469 aa).

The 'HIGH' region signature appears at 11–21 (PSPTGFIHLGN). Residues 118–131 (GEKPRYDGTWRPEP) are compositionally biased toward basic and acidic residues. Residues 118 to 139 (GEKPRYDGTWRPEPGKVLPEPP) are disordered. The 'KMSKS' region motif lies at 243 to 247 (KMSKR). Position 246 (K246) interacts with ATP.

This sequence belongs to the class-I aminoacyl-tRNA synthetase family. Glutamate--tRNA ligase type 1 subfamily. As to quaternary structure, monomer.

Its subcellular location is the cytoplasm. It catalyses the reaction tRNA(Glu) + L-glutamate + ATP = L-glutamyl-tRNA(Glu) + AMP + diphosphate. Catalyzes the attachment of glutamate to tRNA(Glu) in a two-step reaction: glutamate is first activated by ATP to form Glu-AMP and then transferred to the acceptor end of tRNA(Glu). The chain is Glutamate--tRNA ligase from Burkholderia pseudomallei (strain 668).